The chain runs to 236 residues: Phosphoribosylaminoimidazole-succinocarboxamide synthase (236 aa).

It belongs to the SAICAR synthetase family.

It catalyses the reaction 5-amino-1-(5-phospho-D-ribosyl)imidazole-4-carboxylate + L-aspartate + ATP = (2S)-2-[5-amino-1-(5-phospho-beta-D-ribosyl)imidazole-4-carboxamido]succinate + ADP + phosphate + 2 H(+). Its pathway is purine metabolism; IMP biosynthesis via de novo pathway; 5-amino-1-(5-phospho-D-ribosyl)imidazole-4-carboxamide from 5-amino-1-(5-phospho-D-ribosyl)imidazole-4-carboxylate: step 1/2. The chain is Phosphoribosylaminoimidazole-succinocarboxamide synthase from Pseudomonas savastanoi pv. phaseolicola (strain 1448A / Race 6) (Pseudomonas syringae pv. phaseolicola (strain 1448A / Race 6)).